The primary structure comprises 255 residues: tRNA (guanine-N(7)-)-methyltransferase (255 aa).

The disordered stretch occupies residues 1 to 30 (MMHDDPNEAGLPPDDAALPDEAADGADEVN). Acidic residues predominate over residues 17 to 27 (ALPDEAADGAD). S-adenosyl-L-methionine contacts are provided by Glu-86, Glu-111, Asp-138, and Asp-161. Asp-161 is an active-site residue. Substrate contacts are provided by residues Lys-165, Asp-197, and 232 to 235 (TKFE).

Belongs to the class I-like SAM-binding methyltransferase superfamily. TrmB family.

The enzyme catalyses guanosine(46) in tRNA + S-adenosyl-L-methionine = N(7)-methylguanosine(46) in tRNA + S-adenosyl-L-homocysteine. It functions in the pathway tRNA modification; N(7)-methylguanine-tRNA biosynthesis. Functionally, catalyzes the formation of N(7)-methylguanine at position 46 (m7G46) in tRNA. This chain is tRNA (guanine-N(7)-)-methyltransferase, found in Burkholderia vietnamiensis (strain G4 / LMG 22486) (Burkholderia cepacia (strain R1808)).